The chain runs to 236 residues: MPAYKRVLLKLSGEALMGDDAFGINRSTIEGMVNDIAEIVRLGVQVAVVIGGGNIFRGVAGGAAGMDRATADYMGMLATMMNALALQDAMRHANIEGRVQSALRMDQVVEPYIRPRAIRQLEEGKVVIFAAGTGNPFFTTDTAAALRGSEIGAEIVLKATKVDGVYTADPKKDPSATRYTTISFDEAISRNLQVMDATAFALCRDQKLPIKVFSIQKPNALKRVIMGEDEGTLVHV.

10-13 (KLSG) contributes to the ATP binding site. A UMP-binding site is contributed by Gly52. ATP-binding residues include Gly53 and Arg57. UMP contacts are provided by residues Asp72 and 133-140 (TGNPFFTT). ATP is bound by residues Thr160, Tyr166, and Asp169.

The protein belongs to the UMP kinase family. As to quaternary structure, homohexamer.

The protein resides in the cytoplasm. It carries out the reaction UMP + ATP = UDP + ADP. The protein operates within pyrimidine metabolism; CTP biosynthesis via de novo pathway; UDP from UMP (UMPK route): step 1/1. With respect to regulation, inhibited by UTP. Catalyzes the reversible phosphorylation of UMP to UDP. This Ralstonia nicotianae (strain ATCC BAA-1114 / GMI1000) (Ralstonia solanacearum) protein is Uridylate kinase.